The sequence spans 398 residues: ATP-dependent RNA helicase eIF4A (398 aa).

The short motif at 25–53 is the Q motif element; the sequence is DSFDSMDLKPELLRGIYAYGFERPSAIQQ. Positions 56-226 constitute a Helicase ATP-binding domain; that stretch reads IMPIIKGSDV…TKFMRDPVRI (171 aa). 69–76 contributes to the ATP binding site; that stretch reads AQSGTGKT. Residues 174–177 carry the DEAD box motif; sequence DEAD. The Helicase C-terminal domain maps to 237-398; sequence GIKQFYIAVE…EMPMNVADLI (162 aa).

It belongs to the DEAD box helicase family. eIF4A subfamily. Component of the eIF4F complex, which composition varies with external and internal environmental conditions. It is composed of at least eIF4A, eIF4E and eIF4G.

The protein resides in the cytoplasm. It carries out the reaction ATP + H2O = ADP + phosphate + H(+). Its function is as follows. ATP-dependent RNA helicase which is a subunit of the eIF4F complex involved in cap recognition and is required for mRNA binding to ribosome. In the current model of translation initiation, eIF4A unwinds RNA secondary structures in the 5'-UTR of mRNAs which is necessary to allow efficient binding of the small ribosomal subunit, and subsequent scanning for the initiator codon. In Aspergillus clavatus (strain ATCC 1007 / CBS 513.65 / DSM 816 / NCTC 3887 / NRRL 1 / QM 1276 / 107), this protein is ATP-dependent RNA helicase eIF4A (tif1).